A 238-amino-acid chain; its full sequence is 1-(5-phosphoribosyl)-5-[(5-phosphoribosylamino)methylideneamino] imidazole-4-carboxamide isomerase (238 aa).

D7 (proton acceptor) is an active-site residue. D129 (proton donor) is an active-site residue.

The protein belongs to the HisA/HisF family.

The protein localises to the cytoplasm. The enzyme catalyses 1-(5-phospho-beta-D-ribosyl)-5-[(5-phospho-beta-D-ribosylamino)methylideneamino]imidazole-4-carboxamide = 5-[(5-phospho-1-deoxy-D-ribulos-1-ylimino)methylamino]-1-(5-phospho-beta-D-ribosyl)imidazole-4-carboxamide. The protein operates within amino-acid biosynthesis; L-histidine biosynthesis; L-histidine from 5-phospho-alpha-D-ribose 1-diphosphate: step 4/9. The polypeptide is 1-(5-phosphoribosyl)-5-[(5-phosphoribosylamino)methylideneamino] imidazole-4-carboxamide isomerase (Leuconostoc mesenteroides subsp. mesenteroides (strain ATCC 8293 / DSM 20343 / BCRC 11652 / CCM 1803 / JCM 6124 / NCDO 523 / NBRC 100496 / NCIMB 8023 / NCTC 12954 / NRRL B-1118 / 37Y)).